Here is a 334-residue protein sequence, read N- to C-terminus: rRNA 2'-O-methyltransferase fibrillarin (334 aa).

Residues 1–93 (MEGRGGSRGG…GGKPAAGGKP (93 aa)) are compositionally biased toward gly residues. A disordered region spans residues 1–94 (MEGRGGSRGG…GKPAAGGKPG (94 aa)). S-adenosyl-L-methionine contacts are provided by residues 184–185 (TT), 203–204 (EL), 228–229 (DA), and 248–251 (DVAQ).

It belongs to the methyltransferase superfamily. Fibrillarin family. As to quaternary structure, component of box C/D small nucleolar ribonucleoprotein (snoRNP) particles. It is associated with the U3, U8 and U13 small nuclear RNAs. Part of the small subunit (SSU) processome, composed of more than 70 proteins and the RNA chaperone small nucleolar RNA (snoRNA) U3. By homology to other fibrillarins, some or all of the N-terminal domain arginines are modified to asymmetric dimethylarginine (DMA).

It localises to the nucleus. Its subcellular location is the nucleolus. The catalysed reaction is L-glutaminyl-[histone H2A] + S-adenosyl-L-methionine = N(5)-methyl-L-glutaminyl-[histone H2A] + S-adenosyl-L-homocysteine + H(+). S-adenosyl-L-methionine-dependent methyltransferase that has the ability to methylate both RNAs and proteins. Involved in pre-rRNA processing. Utilizes the methyl donor S-adenosyl-L-methionine to catalyze the site-specific 2'-hydroxyl methylation of ribose moieties in pre-ribosomal RNA. Site specificity is provided by a guide RNA that base pairs with the substrate. Methylation occurs at a characteristic distance from the sequence involved in base pairing with the guide RNA. Also acts as a protein methyltransferase by mediating methylation of 'Gln-105' of histone H2A (H2AQ105me), a modification that impairs binding of the FACT complex and is specifically present at 35S ribosomal DNA locus. Part of the small subunit (SSU) processome, first precursor of the small eukaryotic ribosomal subunit. During the assembly of the SSU processome in the nucleolus, many ribosome biogenesis factors, an RNA chaperone and ribosomal proteins associate with the nascent pre-rRNA and work in concert to generate RNA folding, modifications, rearrangements and cleavage as well as targeted degradation of pre-ribosomal RNA by the RNA exosome. The polypeptide is rRNA 2'-O-methyltransferase fibrillarin (fbl) (Dictyostelium discoideum (Social amoeba)).